The following is a 122-amino-acid chain: Chorismate mutase AroH (122 aa).

The Chorismate mutase aroH-type domain occupies 2–120 (VRGIRGAITV…AVRLRPDLES (119 aa)). Prephenate-binding residues include Arg6, Arg89, and Tyr107.

Homotrimer.

Its subcellular location is the cytoplasm. The enzyme catalyses chorismate = prephenate. Its pathway is metabolic intermediate biosynthesis; prephenate biosynthesis; prephenate from chorismate: step 1/1. With respect to regulation, inhibited by 40% with 500 uM tyrosine, and a tyrosine concentration as high as 5 mM reduced activity to 5%. Functionally, catalyzes the Claisen rearrangement of chorismate to prephenate. Probably involved in the aromatic amino acid biosynthesis. In Thermus thermophilus, this protein is Chorismate mutase AroH.